The following is an 82-amino-acid chain: RNA-binding protein Hfq (82 aa).

The 61-residue stretch at 11-71 (DTFLNSVRKS…ISTIMPAQPV (61 aa)) folds into the Sm domain.

Belongs to the Hfq family. In terms of assembly, homohexamer.

RNA chaperone that binds small regulatory RNA (sRNAs) and mRNAs to facilitate mRNA translational regulation in response to envelope stress, environmental stress and changes in metabolite concentrations. Also binds with high specificity to tRNAs. The chain is RNA-binding protein Hfq from Caulobacter sp. (strain K31).